A 293-amino-acid polypeptide reads, in one-letter code: Ribosomal RNA small subunit methyltransferase A (293 aa).

S-adenosyl-L-methionine contacts are provided by Asn29, Leu31, Gly56, Glu77, Asp102, and Asn127.

This sequence belongs to the class I-like SAM-binding methyltransferase superfamily. rRNA adenine N(6)-methyltransferase family. RsmA subfamily.

The protein localises to the cytoplasm. It carries out the reaction adenosine(1518)/adenosine(1519) in 16S rRNA + 4 S-adenosyl-L-methionine = N(6)-dimethyladenosine(1518)/N(6)-dimethyladenosine(1519) in 16S rRNA + 4 S-adenosyl-L-homocysteine + 4 H(+). Specifically dimethylates two adjacent adenosines (A1518 and A1519) in the loop of a conserved hairpin near the 3'-end of 16S rRNA in the 30S particle. May play a critical role in biogenesis of 30S subunits. This is Ribosomal RNA small subunit methyltransferase A from Lysinibacillus sphaericus (strain C3-41).